The sequence spans 53 residues: Beta-defensin C7 (53 aa).

3 disulfides stabilise this stretch: cysteine 20–cysteine 49, cysteine 27–cysteine 42, and cysteine 32–cysteine 50.

It belongs to the beta-defensin family.

It is found in the secreted. Its function is as follows. Has bactericidal activity. The polypeptide is Beta-defensin C7 (Bos taurus (Bovine)).